The sequence spans 930 residues: GPI ethanolamine phosphate transferase 1 (930 aa).

Residues 1 to 8 are Cytoplasmic-facing; sequence MARLGRTG. A helical transmembrane segment spans residues 9-29; the sequence is FLTLAVVFHLIYAYSIFDIYF. The Lumenal segment spans residues 30–466; that stretch reads VSPIVSGMRP…LQTYDWLFLR (437 aa). The N-linked (GlcNAc...) asparagine glycan is linked to Asn-148. Residues 467-487 traverse the membrane as a helical segment; the sequence is TIVTFGYVGWIAYALTTVIHL. Residues 488 to 498 are Cytoplasmic-facing; sequence HVLHGASESDR. The chain crosses the membrane as a helical span at residues 499–519; sequence TTASISFFSSVLVALFSVFLY. Residues 520–521 are Lumenal-facing; sequence QG. Residues 522–542 traverse the membrane as a helical segment; it reads SPWRYYLYGFFPIFFWEEVFA. Residues 543–569 are Cytoplasmic-facing; it reads RRKAFHAGRAGALLLPKRDLHSNKVED. A helical membrane pass occupies residues 570 to 590; the sequence is IDTITYGGAFMLLTGLLYLLF. Residues 591 to 611 lie on the Lumenal side of the membrane; it reads EDEILGTSHQPAAVSRKGSRN. The helical transmembrane segment at 612–632 threads the bilayer; sequence IMGLQLGMVLLALIVTRSSAA. Topologically, residues 633 to 639 are cytoplasmic; it reads SLQAKQG. A helical membrane pass occupies residues 640 to 660; the sequence is LPFGNQVVGWGVLIASLLLPF. The Lumenal segment spans residues 661-684; the sequence is AHRLYPNSHYLHRLMIIFLTFSPT. The helical transmembrane segment at 685–705 threads the bilayer; the sequence is FIILTISYEGLFYFAFCMTLV. The Cytoplasmic portion of the chain corresponds to 706–761; the sequence is TWVRLEHATYVYTAKPVAKQAQETIEPPKKANPGATTVVDGETYRFRTLTVSDARV. Residues 762-782 traverse the membrane as a helical segment; that stretch reads ALFFFFLLQSAFFSTGNIASI. Topologically, residues 783 to 803 are lumenal; sequence SSFSLDSVYRLIPVFNPFSQG. Residues 804–824 form a helical membrane-spanning segment; that stretch reads ALLILKLLIPFAIISANLGIL. Residues 825 to 833 lie on the Cytoplasmic side of the membrane; the sequence is NRRLEVAPS. The helical transmembrane segment at 834 to 854 threads the bilayer; sequence ALFMVVMAISDVMTLNFFYMV. The Lumenal segment spans residues 855-870; that stretch reads RDEGSWLDIGTTISHF. The helical transmembrane segment at 871–891 threads the bilayer; the sequence is CIASFLCTFVAGLEFLSEVFI. Residues 892-930 lie on the Cytoplasmic side of the membrane; sequence SGVDFGLRTDAITASVPDIVNGITSKGQKDVPNGVEDKE.

It belongs to the PIGG/PIGN/PIGO family. PIGN subfamily.

It is found in the endoplasmic reticulum membrane. It participates in glycolipid biosynthesis; glycosylphosphatidylinositol-anchor biosynthesis. Ethanolamine phosphate transferase involved in glycosylphosphatidylinositol-anchor biosynthesis. Transfers ethanolamine phosphate to the first alpha-1,4-linked mannose of the glycosylphosphatidylinositol precursor of GPI-anchor. This is GPI ethanolamine phosphate transferase 1 (mcd4) from Emericella nidulans (strain FGSC A4 / ATCC 38163 / CBS 112.46 / NRRL 194 / M139) (Aspergillus nidulans).